We begin with the raw amino-acid sequence, 166 residues long: Flagellar protein LafL (166 aa).

The chain crosses the membrane as a helical span at residues 6-26 (MIAMFIAMIITSALVSAATIM).

Belongs to the FliL family.

It localises to the cell inner membrane. Functionally, controls the rotational direction of flagella during chemotaxis. The chain is Flagellar protein LafL (lafL) from Vibrio parahaemolyticus serotype O3:K6 (strain RIMD 2210633).